Here is a 425-residue protein sequence, read N- to C-terminus: Enolase (425 aa).

Gln-163 is a (2R)-2-phosphoglycerate binding site. Residue Glu-205 is the Proton donor of the active site. Asp-242, Glu-285, and Asp-312 together coordinate Mg(2+). Residues Lys-337, Arg-366, Ser-367, and Lys-388 each contribute to the (2R)-2-phosphoglycerate site. Residue Lys-337 is the Proton acceptor of the active site.

This sequence belongs to the enolase family. Mg(2+) is required as a cofactor.

It is found in the cytoplasm. Its subcellular location is the secreted. It localises to the cell surface. The catalysed reaction is (2R)-2-phosphoglycerate = phosphoenolpyruvate + H2O. The protein operates within carbohydrate degradation; glycolysis; pyruvate from D-glyceraldehyde 3-phosphate: step 4/5. Functionally, catalyzes the reversible conversion of 2-phosphoglycerate (2-PG) into phosphoenolpyruvate (PEP). It is essential for the degradation of carbohydrates via glycolysis. The protein is Enolase of Jannaschia sp. (strain CCS1).